The chain runs to 284 residues: tRNA-splicing endonuclease (284 aa).

Catalysis depends on residues tyrosine 222, histidine 229, and lysine 257.

Belongs to the tRNA-intron endonuclease family. Archaeal long subfamily. In terms of assembly, homodimer.

It carries out the reaction pretRNA = a 3'-half-tRNA molecule with a 5'-OH end + a 5'-half-tRNA molecule with a 2',3'-cyclic phosphate end + an intron with a 2',3'-cyclic phosphate and a 5'-hydroxyl terminus.. Endonuclease that removes tRNA introns. Cleaves pre-tRNA at the 5'- and 3'-splice sites to release the intron. The products are an intron and two tRNA half-molecules bearing 2',3' cyclic phosphate and 5'-OH termini. Recognizes a pseudosymmetric substrate in which 2 bulged loops of 3 bases are separated by a stem of 4 bp. The protein is tRNA-splicing endonuclease of Picrophilus torridus (strain ATCC 700027 / DSM 9790 / JCM 10055 / NBRC 100828 / KAW 2/3).